We begin with the raw amino-acid sequence, 37 residues long: Large ribosomal subunit protein bL36 (37 aa).

It belongs to the bacterial ribosomal protein bL36 family.

The chain is Large ribosomal subunit protein bL36 from Marinobacter nauticus (strain ATCC 700491 / DSM 11845 / VT8) (Marinobacter aquaeolei).